Here is a 497-residue protein sequence, read N- to C-terminus: Vacuolar-processing enzyme (497 aa).

An N-terminal signal peptide occupies residues 1–31; sequence METHKSLLFFTNYVLFLVFTLSFLPIPGLLA. The active site involves H180. C222 acts as the Nucleophile in catalysis. An intrachain disulfide couples C255 to C269. Residues N320 and N374 are each glycosylated (N-linked (GlcNAc...) asparagine). 2 cysteine pairs are disulfide-bonded: C433–C463 and C445–C480.

It belongs to the peptidase C13 family.

Asparagine-specific endopeptidase involved in the processing of vacuolar seed protein precursors into the mature forms. This chain is Vacuolar-processing enzyme, found in Ricinus communis (Castor bean).